The following is a 616-amino-acid chain: Chaperone protein HtpG (616 aa).

Residues Met1–Arg334 form an a; substrate-binding region. Residues Glu335–Arg549 form a b region. A c region spans residues Ile550–Asn616.

The protein belongs to the heat shock protein 90 family. As to quaternary structure, homodimer.

It localises to the cytoplasm. Functionally, molecular chaperone. Has ATPase activity. This chain is Chaperone protein HtpG, found in Vesicomyosocius okutanii subsp. Calyptogena okutanii (strain HA).